Reading from the N-terminus, the 151-residue chain is NPC intracellular cholesterol transporter 2 (151 aa).

The first 19 residues, 1–19 (MRFLAATFLLLALSTAAQA), serve as a signal peptide directing secretion. Intrachain disulfides connect Cys-27/Cys-140, Cys-42/Cys-47, and Cys-93/Cys-99. A glycan (N-linked (GlcNAc...) asparagine) is linked at Asn-58. Residue Lys-116 is modified to N6-acetyllysine. Asn-135 is a glycosylation site (N-linked (GlcNAc...) asparagine).

This sequence belongs to the NPC2 family. In terms of assembly, interacts with NPC1 (via the second lumenal domain) in a cholestrol-dependent manner. Interacts with NUS1/NgBR, the interaction stabilizes NCP2 and regulates cholesterol trafficking. Interacts with DHDDS. Interacts with NEDD4L (via C2 domain). Interacts with NPC1L1. In terms of tissue distribution, detected in gallbladder bile. Detected in fibroblasts, kidney, liver, spleen, small intestine, placenta and testis (at protein level). Epididymis.

It localises to the secreted. The protein localises to the endoplasmic reticulum. It is found in the lysosome. It catalyses the reaction cholesterol(in) = cholesterol(out). Functionally, intracellular cholesterol transporter which acts in concert with NPC1 and plays an important role in the egress of cholesterol from the lysosomal compartment. Unesterified cholesterol that has been released from LDLs in the lumen of the late endosomes/lysosomes is transferred by NPC2 to the cholesterol-binding pocket in the N-terminal domain of NPC1. May bind and mobilize cholesterol that is associated with membranes. NPC2 binds cholesterol with a 1:1 stoichiometry. Can bind a variety of sterols, including lathosterol, desmosterol and the plant sterols stigmasterol and beta-sitosterol. The secreted form of NCP2 regulates biliary cholesterol secretion via stimulation of ABCG5/ABCG8-mediated cholesterol transport. In Homo sapiens (Human), this protein is NPC intracellular cholesterol transporter 2.